We begin with the raw amino-acid sequence, 1171 residues long: ATP-dependent helicase/deoxyribonuclease subunit B (1171 aa).

Residues 1–343 enclose the UvrD-like helicase ATP-binding domain; the sequence is MSLRFVIGRA…LVAEENYRYR (343 aa). 8 to 15 lines the ATP pocket; it reads GRAGSGKS. One can recognise a UvrD-like helicase C-terminal domain in the interval 281 to 587; it reads MEQPRFHSPA…QFANIPPSLD (307 aa). Residues C805, C1129, C1132, and C1138 each coordinate [4Fe-4S] cluster.

The protein belongs to the helicase family. AddB/RexB type 1 subfamily. As to quaternary structure, heterodimer of AddA and AddB. The cofactor is Mg(2+). Requires [4Fe-4S] cluster as cofactor.

The heterodimer acts as both an ATP-dependent DNA helicase and an ATP-dependent, dual-direction single-stranded exonuclease. Recognizes the chi site generating a DNA molecule suitable for the initiation of homologous recombination. The AddB subunit has 5' -&gt; 3' nuclease activity but not helicase activity. The protein is ATP-dependent helicase/deoxyribonuclease subunit B of Bacillus anthracis.